Here is a 383-residue protein sequence, read N- to C-terminus: Insecticidal crystal protein Cry35Ab1 (383 aa).

Positions 26–138 (DDSGVSLMNK…NNPNQQWNLT (113 aa)) constitute a Ricin B-type lectin domain.

This sequence belongs to the toxin_10 family. Monomer in solution. Copurifies from parasporal inclusion bodies with Cry34Ab1. Proteolytic processing occurs near the C-terminus yielding a stable protein of approximately 40 kDa; this may be the active form of the protein.

Functionally, component of a binary insecticidal toxin active on western corn rootworm (WCR, Diabrotica virgifera subsp. virgifera Le Conte) and probably also on northern corn rootworm (D.barberi). Both proteins are required for maximal toxicity. The larval midgut epithelium is probably the primary target. This protein alone has no activity against southern corn rootworm (Diabrotica undecimpunctata howardi Barber), but it synergizes the toxic effect of its Cry34Ab1 partner. The 2 proteins individually and together form ion channels; channels made in the presence of the 2 proteins have higher conductance. Binds to WCR third instar midgut brush border membrane vesicles; binding improves over 10-fold in the presence of Cry34Ab1. This is Insecticidal crystal protein Cry35Ab1 from Bacillus thuringiensis.